The sequence spans 212 residues: Ras-related protein Rab-2A (212 aa).

A2 is modified (N-acetylalanine). The required for interaction with PRKCI stretch occupies residues 2–19 (AYAYLFKYIIIGDTGVGK). Positions 16, 17, 18, 19, 20, 21, and 38 each coordinate GTP. S20 contacts Mg(2+). Residues 37–42 (LTIGVE) carry the Switch 1 motif. Mg(2+) is bound by residues T38 and D61. Residues 63–72 (AGQESFRSIT) carry the Switch 2 motif. GTP contacts are provided by G64, N119, K120, D122, A150, and K151. Positions 190-212 (QHAATNASHGSNQGGQQAGGGCC) are disordered. Positions 201-212 (NQGGQQAGGGCC) are enriched in gly residues. 2 S-geranylgeranyl cysteine lipidation sites follow: C211 and C212.

The protein belongs to the small GTPase superfamily. Rab family. As to quaternary structure, interacts with PRKCI. Interacts with TRIP11. Interacts (in GTP-bound form) with GARIN1B. Interacts (GTP-bound) with HOPS complex component VPS39; interaction contributes to obtaining a functional HOPS complex that promotes autophagosome-lysosome membrane fusion driven by STX17-SNAP29-VAMP8. Interacts with VPS41. Requires Mg(2+) as cofactor. Prenylated. Prenylation is required for association with cellular membranes.

The protein resides in the endoplasmic reticulum-Golgi intermediate compartment membrane. The protein localises to the melanosome. Its subcellular location is the endoplasmic reticulum membrane. It localises to the golgi apparatus membrane. It is found in the cytoplasmic vesicle. The protein resides in the secretory vesicle. The protein localises to the acrosome. Its subcellular location is the autophagosome membrane. The catalysed reaction is GTP + H2O = GDP + phosphate + H(+). Its activity is regulated as follows. Regulated by guanine nucleotide exchange factors (GEFs) which promote the exchange of bound GDP for free GTP, GTPase activating proteins (GAPs) which increase the GTP hydrolysis activity, and GDP dissociation inhibitors (GDIs) which inhibit the dissociation of the nucleotide from the GTPase. The small GTPases Rab are key regulators of intracellular membrane trafficking, from the formation of transport vesicles to their fusion with membranes. Rabs cycle between active GTP-bound and inactive GDP-bound states. In their active state, drive transport of vesicular carriers from donor organelles to acceptor organelles to regulate the membrane traffic that maintains organelle identity and morphology. RAB2A regulates autophagy by promoting autophagosome-lysosome fusion via recruitment of the HOPS endosomal tethering complex; this process involves autophagosomal RAB2A and lysosomal RAB39A recruitment of HOPS subcomplexes VPS39-VPS11 and VPS41-VPS16-VPS18-VPS33A, respectively, which assemble into a functional complex to mediate membrane tethering and SNAREs-driven membrane fusion. Required for protein transport from the endoplasmic reticulum to the Golgi complex. Regulates the compacted morphology of the Golgi. Together with RAB2B, redundantly required for efficient autophagic flux. The sequence is that of Ras-related protein Rab-2A from Mus musculus (Mouse).